The sequence spans 406 residues: Cysteine desulfurase (406 aa).

Residue lysine 226 is modified to N6-(pyridoxal phosphate)lysine. The active-site Cysteine persulfide intermediate is cysteine 364.

It belongs to the class-V pyridoxal-phosphate-dependent aminotransferase family. Csd subfamily. As to quaternary structure, homodimer. Interacts with SufE and the SufBCD complex composed of SufB, SufC and SufD. The interaction with SufE is required to mediate the direct transfer of the sulfur atom from the S-sulfanylcysteine. Pyridoxal 5'-phosphate is required as a cofactor.

It is found in the cytoplasm. It catalyses the reaction (sulfur carrier)-H + L-cysteine = (sulfur carrier)-SH + L-alanine. It carries out the reaction L-selenocysteine + AH2 = hydrogenselenide + L-alanine + A + H(+). The protein operates within cofactor biosynthesis; iron-sulfur cluster biosynthesis. Its function is as follows. Cysteine desulfurases mobilize the sulfur from L-cysteine to yield L-alanine, an essential step in sulfur metabolism for biosynthesis of a variety of sulfur-containing biomolecules. Component of the suf operon, which is activated and required under specific conditions such as oxidative stress and iron limitation. Acts as a potent selenocysteine lyase in vitro, that mobilizes selenium from L-selenocysteine. Selenocysteine lyase activity is however unsure in vivo. This Yersinia pseudotuberculosis serotype O:1b (strain IP 31758) protein is Cysteine desulfurase.